Here is a 72-residue protein sequence, read N- to C-terminus: Brevinin-2GHc (72 aa).

A signal peptide spans 1-22 (MFTMKKSLLLLFFLGMISLSLC). A propeptide spanning residues 23 to 42 (EQERGADEDEGEVEEQIKRS) is cleaved from the precursor. A disulfide bond links cysteine 64 and cysteine 70.

In terms of tissue distribution, expressed by the skin glands.

The protein localises to the secreted. Functionally, antimicrobial peptide. Active against the Gram-positive bacteria S.aureus FDA209P (MIC=9.8 ug/ml) and B.subtilis ATCC 6633 (MIC&gt;64 ug/ml), and the Gram-negative bacteria E.coli O111 (MIC=19.6 ug/ml) and E.coli ATCC 25922 (MIC=9.8 ug/ml). Not active against the fungus C.albicans. In Sylvirana guentheri (Gunther's frog), this protein is Brevinin-2GHc.